Reading from the N-terminus, the 175-residue chain is Ferritin light chain (175 aa).

Ser2 is subject to N-acetylserine. In terms of domain architecture, Ferritin-like diiron spans 7–156 (QNYSTDVEAA…DHLTNLHRLG (150 aa)). Residues Glu54, Glu57, Glu58, Glu61, and Glu64 each contribute to the Fe cation site. The tract at residues 54-61 (ELAEEKRE) is catalytic site for iron oxidation.

This sequence belongs to the ferritin family. As to quaternary structure, oligomer of 24 subunits. There are two types of subunits: L (light) chain and H (heavy) chain. The major chain can be light or heavy, depending on the species and tissue type. The functional molecule forms a roughly spherical shell with a diameter of 12 nm and contains a central cavity into which the insoluble mineral iron core is deposited. Interacts with NCOA4.

The protein localises to the cytoplasmic vesicle. It is found in the autophagosome. The protein resides in the cytoplasm. It localises to the autolysosome. Stores iron in a soluble, non-toxic, readily available form. Important for iron homeostasis. Iron is taken up in the ferrous form and deposited as ferric hydroxides after oxidation. Also plays a role in delivery of iron to cells. Mediates iron uptake in capsule cells of the developing kidney. Delivery to lysosomes by the cargo receptor NCOA4 for autophagic degradation and release or iron. The polypeptide is Ferritin light chain (FTL) (Pongo abelii (Sumatran orangutan)).